The primary structure comprises 262 residues: Apolipoprotein A-Ia (262 aa).

Residues 1 to 18 (MKFVALALTLLLALGSQA) form the signal peptide. The interval 32-63 (YKAAALVYLNQVKDQAEKALDNLDGTDYEQYK) is 3 X approximate tandem repeats. A run of 2 repeats spans residues 64-85 (LQLSESLTKLQEYAQTTSQALT) and 87-107 (YAETISTQLMENTKQLRERVM). The interval 64–262 (LQLSESLTKL…YETIAKAIQA (199 aa)) is 10 X approximate tandem repeats. Residues 108 to 118 (TDVEDLRSKLE) form a 3; half-length repeat. 5 tandem repeats follow at residues 119–140 (PHRAELYTALQKHIDEYREKLE), 141–162 (PVFQEYSALNRQNAEQLRAKLE), 163–184 (PLMDDIRKAFESNIEETKSKVV), 185–206 (PMVEAVRTKLTERLEDLRTMAA), and 207–228 (PYAEEYKEQLVKAVEEAREKIA). One copy of the 9; half-length repeat lies at 229–239 (PHTQDLQTRME). Repeat 10 spans residues 240–262 (PYMENVRTTFAQMYETIAKAIQA).

The protein belongs to the apolipoprotein A1/A4/E family. In terms of assembly, homodimer. Interacts with naxe and yjefn3.

It localises to the secreted. Participates in the reverse transport of cholesterol from tissues to the liver for excretion by promoting cholesterol efflux from tissues and by acting as a cofactor for the lecithin cholesterol acyltransferase (LCAT). The polypeptide is Apolipoprotein A-Ia (Danio rerio (Zebrafish)).